The following is a 317-amino-acid chain: MKNNGGARVVVIGAGFVGASYVFALMNQGIADEIVLIDANESKAIGDAMDFNHGKVFAPKPVDIWHGDYDDCRDADLVVICAGANQKPGETRLDLVDKNIAIFRSIVESVMASGFQGLFLVATNPVDILTYATWKFSGLPHERVIGSGTILDTARFRFLLGEYFSVAPQNVHAYIIGEHGDTELPVWSQAYIGVMPIRKLVESKGEEAQKDLERIFVNVRDAAYQIIEKKGATYYGIAMGLARVTRAILHNENAILTVSAYLDGLYGERDVYIGVPAVINRNGIREVIEIELNDDEKNRFHHSAATLKSVLARAFTR.

NAD(+) is bound by residues 16–17, D38, K43, Y69, and 83–84; these read FV and GA. 2 residues coordinate substrate: Q86 and R92. NAD(+) is bound by residues S105, 122–124, and S147; that span reads ATN. Residue 124–127 coordinates substrate; it reads NPVD. 152–155 serves as a coordination point for substrate; sequence DTAR. Residues R157 and 169–172 each bind beta-D-fructose 1,6-bisphosphate; that span reads QNVH. The active-site Proton acceptor is H179. Y224 is subject to Phosphotyrosine. Position 233 (T233) interacts with substrate.

Belongs to the LDH/MDH superfamily. LDH family. As to quaternary structure, exists as a dimer and a tetramer (dimer of dimers). The conversion occurs via the binding of fructose 1,6-bisphosphate (FBP) to the dimer.

It localises to the cytoplasm. The catalysed reaction is (S)-lactate + NAD(+) = pyruvate + NADH + H(+). Its pathway is fermentation; pyruvate fermentation to lactate; (S)-lactate from pyruvate: step 1/1. Allosterically activated by fructose 1,6-bisphosphate (FBP). The improvement in affinity for substrate occurs in two steps; the binding of fructose 1,6-bisphosphate (FBP) to the dimer, and the dimer to tetramer conversion. Functionally, catalyzes the conversion of lactate to pyruvate. This is L-lactate dehydrogenase from Geobacillus stearothermophilus (Bacillus stearothermophilus).